We begin with the raw amino-acid sequence, 378 residues long: Forkhead box protein F1 (378 aa).

Residues 1–45 form a disordered region; it reads MSAPDKQQPPHGGGTGGGGGAGGQAMDPAAAGPTKAKKTNAGVRR. Positions 11-23 are enriched in gly residues; it reads HGGGTGGGGGAGG. Residues 24–42 are compositionally biased toward low complexity; that stretch reads QAMDPAAAGPTKAKKTNAG. Residues 47 to 138 constitute a DNA-binding region (fork-head); it reads EKPPYSYIAL…EFMFEEGSFR (92 aa).

In terms of tissue distribution, expressed primarily in lung in alveolar type II pneumocyte cells, and to a lesser extent in placenta, stomach, intestine and colon.

The protein localises to the nucleus. Probable transcription activator for a number of lung-specific genes. The sequence is that of Forkhead box protein F1 (Foxf1) from Mus musculus (Mouse).